Consider the following 117-residue polypeptide: MARVKGAVRTRARHKKILKLAKGYFGAKSKLFRMANQAVMKSLNYAYNDRRAKKRDFRKLWIARINAAARINGLTYSRFISGLRKSGIELNRKVLADLAVNDAAAFAQLAETAKAAK.

The protein belongs to the bacterial ribosomal protein bL20 family.

Functionally, binds directly to 23S ribosomal RNA and is necessary for the in vitro assembly process of the 50S ribosomal subunit. It is not involved in the protein synthesizing functions of that subunit. This Ruminiclostridium cellulolyticum (strain ATCC 35319 / DSM 5812 / JCM 6584 / H10) (Clostridium cellulolyticum) protein is Large ribosomal subunit protein bL20.